The following is a 171-amino-acid chain: 3-hydroxydecanoyl-[acyl-carrier-protein] dehydratase (171 aa).

Histidine 71 is a catalytic residue.

Belongs to the thioester dehydratase family. FabA subfamily. In terms of assembly, homodimer.

It localises to the cytoplasm. The catalysed reaction is a (3R)-hydroxyacyl-[ACP] = a (2E)-enoyl-[ACP] + H2O. It catalyses the reaction (3R)-hydroxydecanoyl-[ACP] = (2E)-decenoyl-[ACP] + H2O. It carries out the reaction (2E)-decenoyl-[ACP] = (3Z)-decenoyl-[ACP]. Its pathway is lipid metabolism; fatty acid biosynthesis. Its function is as follows. Necessary for the introduction of cis unsaturation into fatty acids. Catalyzes the dehydration of (3R)-3-hydroxydecanoyl-ACP to E-(2)-decenoyl-ACP and then its isomerization to Z-(3)-decenoyl-ACP. Can catalyze the dehydratase reaction for beta-hydroxyacyl-ACPs with saturated chain lengths up to 16:0, being most active on intermediate chain length. The sequence is that of 3-hydroxydecanoyl-[acyl-carrier-protein] dehydratase from Agrobacterium fabrum (strain C58 / ATCC 33970) (Agrobacterium tumefaciens (strain C58)).